Reading from the N-terminus, the 809-residue chain is Valine--tRNA ligase (809 aa).

Residues 60-70 (PFTSGELHMGH) carry the 'HIGH' region motif. The 'KMSKS' region signature appears at 546–550 (RMSKS). Lysine 549 contributes to the ATP binding site.

It belongs to the class-I aminoacyl-tRNA synthetase family. ValS type 2 subfamily.

It is found in the cytoplasm. The enzyme catalyses tRNA(Val) + L-valine + ATP = L-valyl-tRNA(Val) + AMP + diphosphate. In terms of biological role, catalyzes the attachment of valine to tRNA(Val). As ValRS can inadvertently accommodate and process structurally similar amino acids such as threonine, to avoid such errors, it has a 'posttransfer' editing activity that hydrolyzes mischarged Thr-tRNA(Val) in a tRNA-dependent manner. In Sulfurisphaera tokodaii (strain DSM 16993 / JCM 10545 / NBRC 100140 / 7) (Sulfolobus tokodaii), this protein is Valine--tRNA ligase.